The primary structure comprises 114 residues: uncharacterized protein (114 aa).

A helical membrane pass occupies residues 7–27 (YIFSFWFFFLVEYVVTFRLFL). The interval 90 to 114 (KNSPEKKKFKRGLPISSKYTDGKKR) is disordered.

It is found in the membrane. This is an uncharacterized protein from Saccharomyces cerevisiae (strain ATCC 204508 / S288c) (Baker's yeast).